A 1368-amino-acid polypeptide reads, in one-letter code: DNA-directed RNA polymerase subunit beta (1368 aa).

This sequence belongs to the RNA polymerase beta chain family. As to quaternary structure, the RNAP catalytic core consists of 2 alpha, 1 beta, 1 beta' and 1 omega subunit. When a sigma factor is associated with the core the holoenzyme is formed, which can initiate transcription.

The enzyme catalyses RNA(n) + a ribonucleoside 5'-triphosphate = RNA(n+1) + diphosphate. In terms of biological role, DNA-dependent RNA polymerase catalyzes the transcription of DNA into RNA using the four ribonucleoside triphosphates as substrates. This is DNA-directed RNA polymerase subunit beta from Burkholderia thailandensis (strain ATCC 700388 / DSM 13276 / CCUG 48851 / CIP 106301 / E264).